Reading from the N-terminus, the 535-residue chain is Inositol 1,4,5-trisphosphate receptor-interacting protein-like 2 (535 aa).

A signal peptide spans 1–32 (MSVRYTLNLRVFWPLVTGLCTALVCLYHALRS). The Extracellular segment spans residues 33 to 43 (SEDARAESPDG). A helical membrane pass occupies residues 44 to 64 (ADSGFPLLKVAILLLLGYILL). The Cytoplasmic portion of the chain corresponds to 65–535 (RCRHAIRQRL…RIQGSPEDEP (471 aa)). S139 carries the phosphoserine modification.

It belongs to the ITPRIP family.

The protein resides in the membrane. The protein is Inositol 1,4,5-trisphosphate receptor-interacting protein-like 2 (Itpripl2) of Mus musculus (Mouse).